The chain runs to 55 residues: Large ribosomal subunit protein bL33B (55 aa).

This sequence belongs to the bacterial ribosomal protein bL33 family.

This Salinispora tropica (strain ATCC BAA-916 / DSM 44818 / JCM 13857 / NBRC 105044 / CNB-440) protein is Large ribosomal subunit protein bL33B.